Here is a 190-residue protein sequence, read N- to C-terminus: Cathelicidin-3 (190 aa).

A signal peptide spans 1–29; that stretch reads METQMASPSLGRCSLWLLLLGLLLPSASA. Gln-30 bears the Pyrrolidone carboxylic acid mark. Residues 30–130 constitute a propeptide that is removed on maturation; that stretch reads QALSYREAVL…DLNCNELQSV (101 aa). Disulfide bonds link Cys-85/Cys-96 and Cys-107/Cys-124. Residues 133 to 151 show a composition bias toward basic residues; the sequence is LRPRRPRLPRPRPRPRPRP. Residues 133 to 190 form a disordered region; sequence LRPRRPRLPRPRPRPRPRPRSLPLPRPQPRRIPRPILLPWRPPRPIPRPQPQPIPRWL. Positions 172–190 are enriched in pro residues; sequence WRPPRPIPRPQPQPIPRWL.

Belongs to the cathelicidin family.

It localises to the secreted. Its function is as follows. Exerts, in vitro, a potent antimicrobial activity. Probably due to an impairment of the function of the respiratory chain and of energy-dependent activities in the inner membrane of susceptible microorganisms. The polypeptide is Cathelicidin-3 (CATHL3) (Ovis aries (Sheep)).